The following is a 586-amino-acid chain: Chaperonin 60 subunit alpha 1, chloroplastic (586 aa).

Residues 1 to 46 (MASANALSSASVLCSSRQSKLGGGNQQQGQRVSYNKRTIRRFSVRA) constitute a chloroplast transit peptide. The residue at position 90 (Ser-90) is a Phosphoserine.

This sequence belongs to the chaperonin (HSP60) family. Part of the Cpn60 complex composed of 7 alpha and 7 beta subunits. This complex shows ATPase activity. The Cpn60 complex interacts with the Cpn10 complex. As to expression, expressed in leaves, stems, siliques and flowers.

The protein localises to the plastid. Its subcellular location is the chloroplast. In terms of biological role, binds RuBisCO small and large subunits and is implicated in the assembly of the enzyme oligomer. Involved in protein assisted folding. Required for proper chloroplast development. In Arabidopsis thaliana (Mouse-ear cress), this protein is Chaperonin 60 subunit alpha 1, chloroplastic (CPN60A1).